We begin with the raw amino-acid sequence, 179 residues long: Large ribosomal subunit protein uL5 (179 aa).

It belongs to the universal ribosomal protein uL5 family. Part of the 50S ribosomal subunit; part of the 5S rRNA/L5/L18/L25 subcomplex. Contacts the 5S rRNA and the P site tRNA. Forms a bridge to the 30S subunit in the 70S ribosome.

In terms of biological role, this is one of the proteins that bind and probably mediate the attachment of the 5S RNA into the large ribosomal subunit, where it forms part of the central protuberance. In the 70S ribosome it contacts protein S13 of the 30S subunit (bridge B1b), connecting the 2 subunits; this bridge is implicated in subunit movement. Contacts the P site tRNA; the 5S rRNA and some of its associated proteins might help stabilize positioning of ribosome-bound tRNAs. The polypeptide is Large ribosomal subunit protein uL5 (Bacillus velezensis (strain DSM 23117 / BGSC 10A6 / LMG 26770 / FZB42) (Bacillus amyloliquefaciens subsp. plantarum)).